We begin with the raw amino-acid sequence, 530 residues long: MILFSVSPVSIWVFVIYAVTIIIAIYRLFFHPYAKYPGPFLAKLTSWYSIYHTYYGDLHIDIWECHNKYELGNYVRYGPNRILVNTSEGLNAIYSQGKNTQKAKAYRKVSLVPGVHPTFSMIDNQGHAKLRRLVGQGLSNAHIRMYDQELRQSALLFASRLGEEIDRFEPNQPHGNHDGWTSPKNVASWSNYFTFDVMSHLVYGTSYDLLTDSENHWVIEGVLGQMRRISFLTMLPELEDMRFDRILFPDARRKAYRFSAKSREILEARKSKSEEMRHQDAKVDVFLRLLSAKDPETGESLSDKQLWAESNLLIIAGSDTSSTGLAASFFYLSRNPSAYDRVKQEVRSALTTSEDISQGPKLLSCTYLRACVLESLRLSPPLGGAMWRQTMPGGLFIAGSDHDFHIPGGCEVGTGVYAIHHNEEYYPEPFRFRPERWLPQEVGDEAVAKAQSAFQAFSLGPRSCPGKNLAMLEIPFALAAVMMDYDFRKVDSPLGGVGEGKGKFVGQYQTFWAFTSIKDGPYIQFKRREP.

The helical transmembrane segment at 6–26 (VSPVSIWVFVIYAVTIIIAIY) threads the bilayer. An N-linked (GlcNAc...) asparagine glycan is attached at Asn-85. Position 464 (Cys-464) interacts with heme.

Belongs to the cytochrome P450 family. It depends on heme as a cofactor.

The protein resides in the membrane. It participates in secondary metabolite biosynthesis. In terms of biological role, cytochrome P450 monooxygenase; part of the gene cluster that mediates the biosynthesis of the cyclic tetrapeptide apicidin F (APF). The non-ribosomal peptide synthetase apf1 incorporates four different amino acids to produce apicidin F: L-phenylalanine, D-pipecolic acid (D-pip), N-methoxy-L-tryptophan and L-2-aminooctanedioic acid. L-Phenylalanine is the only proteinogenic amino acid directly used by apf1. The 3 other apf1 substrates are non-proteinogenic and have to be modified by other enzymes of the cluster. Lysine is converted to delta-1-pyrroline-5-carboxylate (P5C) which is reduced to L-pipecolic acid (L-pip) by apf3. L-pip is epimerized to D-pip, probably by apf1 activity, prior to incorporation. L-Tryptophan is N-oxidyzed by one of the cytochrome P450 monooxygenases (apf7 or apf8), and further methylated at the hydroxy group by the O-methyltransferase apf6 to yield N-methoxy-L-tryptophan. The synthesis of the fourth apf1 substrate is more complex. The fatty acid synthase apf5 is involved in the synthesis of the octanoic acid backbone of L-2-aminooctanedioic acid by fixing one acetyl-CoA unit and three malonyl-CoA units. Then one of the cytochrome P450 monooxygenases (apf7 or apf8) may oxidize this backbone to 2-oxooctanoic acid. The aminotransferase apf4 is predicted to catalyze the exchange of the keto group with an amino group. The next step would be the oxidation of 2-aminooctanoic acid by one of the cytochrome P450 monooxygenases (apf7 or apf8). The last step is the oxidation of 2-amino-8-hydroxyoctanoic acid to 2-aminooctanedioic acid is catalyzed by the FAD-dependent monooxygenase apf9. This Gibberella fujikuroi (strain CBS 195.34 / IMI 58289 / NRRL A-6831) (Bakanae and foot rot disease fungus) protein is Cytochrome P450 monooxygenase apf7.